The primary structure comprises 406 residues: GTPase Obg (406 aa).

In terms of domain architecture, Obg spans 1–159; it reads MKFVDEVSIH…RDLKLELKVL (159 aa). The disordered stretch occupies residues 127 to 148; sequence NTRFKSSTNRAPRQTTPGKPGE. Residues 129 to 143 are compositionally biased toward polar residues; sequence RFKSSTNRAPRQTTP. An OBG-type G domain is found at 160–334; sequence ADVGLLGLPN…LSQDIMRYLD (175 aa). GTP contacts are provided by residues 166 to 173, 191 to 195, 213 to 216, 283 to 286, and 315 to 317; these read GLPNAGKS, FTTLV, DIPG, NKMD, and SAL. Positions 173 and 193 each coordinate Mg(2+). The disordered stretch occupies residues 378–406; sequence GLKNAGAADDDDFDDEEDDGDGPEIFYVP. Acidic residues predominate over residues 385–399; it reads ADDDDFDDEEDDGDG.

Belongs to the TRAFAC class OBG-HflX-like GTPase superfamily. OBG GTPase family. In terms of assembly, monomer. Requires Mg(2+) as cofactor.

It is found in the cytoplasm. In terms of biological role, an essential GTPase which binds GTP, GDP and possibly (p)ppGpp with moderate affinity, with high nucleotide exchange rates and a fairly low GTP hydrolysis rate. Plays a role in control of the cell cycle, stress response, ribosome biogenesis and in those bacteria that undergo differentiation, in morphogenesis control. This Pseudomonas paraeruginosa (strain DSM 24068 / PA7) (Pseudomonas aeruginosa (strain PA7)) protein is GTPase Obg.